We begin with the raw amino-acid sequence, 557 residues long: Putative glutathione-regulated potassium-efflux system protein KefB (557 aa).

The next 10 membrane-spanning stretches (helical) occupy residues 2–22 (LGYLLAGIAIGPWGLGFISDV), 24–44 (EILHFSELGVVFLMFIIGLEL), 56–76 (IFGVGAAQVLLSAALLAGLLM), 84–104 (AAVVGGIGFAMSSTAMALQLM), 121–141 (VLLFQDLAVIPALALVPLLAG), 146–166 (HFDWMKIGMKVLEFVGMLIGG), 176–196 (FIAASGVREVFTAATLLLVLG), 199–219 (LFMDALGLSMALGTFIAGVLL), 237–257 (GLLLGLFFISVGMSLNLGVLY), and 260–280 (LLWVVISVVVLVAVKILVLYL). The region spanning 356-475 (KPQVIVVGFG…AGVTQFSRET (120 aa)) is the RCK N-terminal domain.

Belongs to the monovalent cation:proton antiporter 2 (CPA2) transporter (TC 2.A.37) family. KefB subfamily. In terms of assembly, interacts with the regulatory subunit KefG.

The protein resides in the cell inner membrane. In terms of biological role, pore-forming subunit of a potassium efflux system that confers protection against electrophiles. Catalyzes K(+)/H(+) antiport. This is Putative glutathione-regulated potassium-efflux system protein KefB from Shigella flexneri.